The primary structure comprises 365 residues: Alanine racemase (365 aa).

The Proton acceptor; specific for D-alanine role is filled by Lys-32. Lys-32 is subject to N6-(pyridoxal phosphate)lysine. Arg-128 contributes to the substrate binding site. Tyr-257 serves as the catalytic Proton acceptor; specific for L-alanine. Met-305 provides a ligand contact to substrate.

The protein belongs to the alanine racemase family. Requires pyridoxal 5'-phosphate as cofactor.

It catalyses the reaction L-alanine = D-alanine. It participates in amino-acid biosynthesis; D-alanine biosynthesis; D-alanine from L-alanine: step 1/1. Functionally, catalyzes the interconversion of L-alanine and D-alanine. May also act on other amino acids. This is Alanine racemase (alr) from Francisella tularensis subsp. holarctica (strain FTNF002-00 / FTA).